Here is a 534-residue protein sequence, read N- to C-terminus: Cytochrome c oxidase subunit 1 (534 aa).

Residues 16-36 traverse the membrane as a helical segment; the sequence is VLYFIFSVFCGMAGTGMSMII. Residues glutamate 39 and glycine 44 each contribute to the Ca(2+) site. Histidine 62 serves as a coordination point for Fe(II)-heme a. 6 helical membrane-spanning segments follow: residues 64–84, 101–121, 147–167, 183–203, 235–255, and 267–287; these read ILMV…NYLL, ISFW…LVES, AIFA…NFIV, PLFV…LPVL, LFWF…FGVI, and VFGE…GFLV. Histidine 241 contributes to the Cu cation binding site. Residues 241–245 constitute a cross-link (1'-histidyl-3'-tyrosine (His-Tyr)); it reads HPEVY. Tyrosine 245 serves as a coordination point for O2. Cu cation contacts are provided by histidine 290 and histidine 291. A run of 2 helical transmembrane segments spans residues 310–330 and 338–358; these read MIIA…IYGG and MMYA…GVAL. Mg(2+) is bound by residues histidine 368 and aspartate 369. 2 helical membrane passes run 372 to 392 and 414 to 434; these read YVVA…MFAG and FWLI…LGIN. Histidine 376 provides a ligand contact to heme a3. Histidine 378 is a binding site for Fe(II)-heme a. Proline 441 lines the Ca(2+) pocket. The chain crosses the membrane as a helical span at residues 453 to 473; it reads VSSIGSFIAMISLILFIYILF.

Belongs to the heme-copper respiratory oxidase family. As to quaternary structure, component of the cytochrome c oxidase (complex IV, CIV), a multisubunit enzyme composed of a catalytic core of 3 subunits and several supernumerary subunits. The complex exists as a monomer or a dimer and forms supercomplexes (SCs) in the inner mitochondrial membrane with ubiquinol-cytochrome c oxidoreductase (cytochrome b-c1 complex, complex III, CIII). Heme serves as cofactor. It depends on Cu cation as a cofactor.

The protein resides in the mitochondrion inner membrane. The catalysed reaction is 4 Fe(II)-[cytochrome c] + O2 + 8 H(+)(in) = 4 Fe(III)-[cytochrome c] + 2 H2O + 4 H(+)(out). Its pathway is energy metabolism; oxidative phosphorylation. Its function is as follows. Component of the cytochrome c oxidase, the last enzyme in the mitochondrial electron transport chain which drives oxidative phosphorylation. The respiratory chain contains 3 multisubunit complexes succinate dehydrogenase (complex II, CII), ubiquinol-cytochrome c oxidoreductase (cytochrome b-c1 complex, complex III, CIII) and cytochrome c oxidase (complex IV, CIV), that cooperate to transfer electrons derived from NADH and succinate to molecular oxygen, creating an electrochemical gradient over the inner membrane that drives transmembrane transport and the ATP synthase. Cytochrome c oxidase is the component of the respiratory chain that catalyzes the reduction of oxygen to water. Electrons originating from reduced cytochrome c in the intermembrane space (IMS) are transferred via the dinuclear copper A center (CU(A)) of subunit 2 and heme A of subunit 1 to the active site in subunit 1, a binuclear center (BNC) formed by heme A3 and copper B (CU(B)). The BNC reduces molecular oxygen to 2 water molecules using 4 electrons from cytochrome c in the IMS and 4 protons from the mitochondrial matrix. The sequence is that of Cytochrome c oxidase subunit 1 (COX1) from Vanderwaltozyma polyspora (strain ATCC 22028 / DSM 70294 / BCRC 21397 / CBS 2163 / NBRC 10782 / NRRL Y-8283 / UCD 57-17) (Kluyveromyces polysporus).